A 1181-amino-acid chain; its full sequence is MFFYLSKKISIPNNVKLQCVSWNKEQGFIACGGEDGLLKVLKLETQTDDAKLRGLAAPSNLSMNQTLEGHSGSVQVVTWNEQYQKLTTSDENGLIIVWMLYKGSWIEEMINNRNKSVVRSMSWNADGQKICIVYEDGAVIVGSVDGNRIWGKDLKGIQLSHVTWSADSKVLLFGMANGEIHIYDNQGNFMIKMKLSCLVNVTGAISIAGIHWYHGTEGYVEPDCPCLAVCFDNGRCQIMRHENDQNPVLIDTGMYVVGIQWNHMGSVLAVAGFQKAAMQDKDVNIVQFYTPFGEHLGTLKVPGKEISALSWEGGGLKIALAVDSFIYFANIRPNYKWGYCSNTVVYAYTRPDRPEYCVVFWDTKNNEKYVKYVKGLISITTCGDFCILATKADENHPQEENEMETFGATFVLVLCNSIGTPLDPKYIDIVPLFVAMTKTHVIAASKEAFYTWQYRVAKKLTALEINQITRSRKEGRERIYHVDDTPSGSMDGVLDYSKTIQGTRDPICAITASDKILIVGRESGTIQRYSLPNVGLIQKYSLNCRAYQLSLNCNSSRLAIIDISGVLTFFDLDARVTDSTGQQVVGELLKLERRDVWDMKWAKDNPDLFAMMEKTRMYVFRNLDPEEPIQTSGYICNFEDLEIKSVLLDEILKDPEHPNKDYLINFEIRSLRDSRALIEKVGIKDASQFIEDNPHPRLWRLLAEAALQKLDLYTAEQAFVRCKDYQGIKFVKRLGKLLSESMKQAEVVGYFGRFEEAERTYLEMDRRDLAIGLRLKLGDWFRVLQLLKTGSGDADDSLLEQANNAIGDYFADRQKWLNAVQYYVQGRNQERLAECYYMLEDYEGLENLAISLPENHKLLPEIAQMFVRVGMCEQAVTAFLKCSQPKAAVDTCVHLNQWNKAVELAKNHSMKEIGSLLARYASHLLEKNKTLDAIELYRKANYFFDAAKLMFKIADEEAKKGSKPLRVKKLYVLSALLIEQYHEQMKNAQRGKVKGKSSEATSALAGLLEEEVLSTTDRFTDNAWRGAEAYHFFILAQRQLYEGCVDTALKTALHLKDYEDIIPPVEIYSLLALCACASRAFGTCSKAFIKLKSLETLSSEQKQQYEDLALEIFTKHTSKDNRKPELDSLMEGGEGKLPTCVATGSPITEYQFWMCSVCKHGVLAQEISHYSFCPLCHSPVG.

6 WD repeats span residues Tyr4–Leu43, Leu61–Leu100, Trp105–Ser143, Asn147–Asn185, Met193–His241, and Asn246–Phe288.

Component of the IFT complex A (IFT-A) complex. IFT-A complex is divided into a core subcomplex composed of IFT122:IFT140:WDR19 which is associated with TULP3 and a peripheral subcomplex composed of IFT43:WDR35:TTC21B. Interacts directy with IFT122, ITF43 and TTC21B. Interacts with IFT43. Interacts with CFAP61.

Its subcellular location is the cytoplasm. The protein resides in the cytoskeleton. The protein localises to the microtubule organizing center. It is found in the centrosome. It localises to the cilium axoneme. Its subcellular location is the cilium basal body. As a component of the IFT complex A (IFT-A), a complex required for retrograde ciliary transport and entry into cilia of G protein-coupled receptors (GPCRs), it is involved in ciliogenesis and ciliary protein trafficking. May promote CASP3 activation and TNF-stimulated apoptosis. This chain is WD repeat-containing protein 35, found in Homo sapiens (Human).